The chain runs to 115 residues: Holo-[acyl-carrier-protein] synthase (115 aa).

Mg(2+) is bound by residues D5 and E51.

Belongs to the P-Pant transferase superfamily. AcpS family. The cofactor is Mg(2+).

The protein resides in the cytoplasm. It catalyses the reaction apo-[ACP] + CoA = holo-[ACP] + adenosine 3',5'-bisphosphate + H(+). Transfers the 4'-phosphopantetheine moiety from coenzyme A to a Ser of acyl-carrier-protein. The protein is Holo-[acyl-carrier-protein] synthase of Helicobacter acinonychis (strain Sheeba).